A 311-amino-acid chain; its full sequence is Coproporphyrin III ferrochelatase 1 (311 aa).

Fe-coproporphyrin III is bound by residues Tyr12, Arg29, 45–46 (RY), Ser53, and Tyr124. Residues His182 and Glu263 each coordinate Fe(2+).

The protein belongs to the ferrochelatase family.

Its subcellular location is the cytoplasm. The enzyme catalyses Fe-coproporphyrin III + 2 H(+) = coproporphyrin III + Fe(2+). The protein operates within porphyrin-containing compound metabolism; protoheme biosynthesis. Involved in coproporphyrin-dependent heme b biosynthesis. Catalyzes the insertion of ferrous iron into coproporphyrin III to form Fe-coproporphyrin III. In Bacillus thuringiensis subsp. konkukian (strain 97-27), this protein is Coproporphyrin III ferrochelatase 1.